We begin with the raw amino-acid sequence, 576 residues long: RING finger and SPRY domain-containing protein 1 (576 aa).

The first 16 residues, 1-16 (MIVFGWAVFLASRSLG), serve as a signal peptide directing secretion. Serine 50 bears the Phosphoserine mark. The disordered stretch occupies residues 50–99 (SGTDDSVDTQQQQAENSAVPTADTRSQPRDPVRPPRRGRGPHEPRRKKQN). A compositionally biased stretch (polar residues) spans 57-68 (DTQQQQAENSAV). The span at 83 to 97 (PPRRGRGPHEPRRKK) shows a compositional bias: basic residues. The B30.2/SPRY domain maps to 300–483 (LFLKEGRQLT…CEFNFGAKPF (184 aa)). A glycan (N-linked (GlcNAc...) asparagine) is linked at asparagine 314. The RING-type zinc finger occupies 527-562 (CSLCCDEVADTQLKPCGHSDLCMDCALQLETCPLCR).

The protein resides in the secreted. The polypeptide is RING finger and SPRY domain-containing protein 1 (RSPRY1) (Homo sapiens (Human)).